The following is a 387-amino-acid chain: Large ribosomal subunit protein uL3 (387 aa).

Ser24 bears the Phosphoserine mark. A Glycyl lysine isopeptide (Lys-Gly) (interchain with G-Cter in ubiquitin) cross-link involves residue Lys39. Thr103 carries the post-translational modification Phosphothreonine. Lys136 is covalently cross-linked (Glycyl lysine isopeptide (Lys-Gly) (interchain with G-Cter in ubiquitin)). Ser156 carries the phosphoserine modification. Residue His243 is modified to Pros-methylhistidine. Ser297 is modified (phosphoserine).

Belongs to the universal ribosomal protein uL3 family. In terms of assembly, component of the large ribosomal subunit (LSU). Mature yeast ribosomes consist of a small (40S) and a large (60S) subunit. The 40S small subunit contains 1 molecule of ribosomal RNA (18S rRNA) and 33 different proteins (encoded by 57 genes). The large 60S subunit contains 3 rRNA molecules (25S, 5.8S and 5S rRNA) and 46 different proteins (encoded by 81 genes). uL3 forms together with ES39L one of the contact sites for the signal recognition particle that targets ribosomes to the endoplasmic reticulum membrane. Methylation at His-243 by HPM1 is required for proper 60S subunit assembly and promotes translational elongation fidelity.

Its subcellular location is the cytoplasm. Component of the ribosome, a large ribonucleoprotein complex responsible for the synthesis of proteins in the cell. The small ribosomal subunit (SSU) binds messenger RNAs (mRNAs) and translates the encoded message by selecting cognate aminoacyl-transfer RNA (tRNA) molecules. The large subunit (LSU) contains the ribosomal catalytic site termed the peptidyl transferase center (PTC), which catalyzes the formation of peptide bonds, thereby polymerizing the amino acids delivered by tRNAs into a polypeptide chain. The nascent polypeptides leave the ribosome through a tunnel in the LSU and interact with protein factors that function in enzymatic processing, targeting, and the membrane insertion of nascent chains at the exit of the ribosomal tunnel. uL3 plays a role in coordinating processes of accommodating the aminoacyl-tRNA in the PTC. In Saccharomyces cerevisiae (strain ATCC 204508 / S288c) (Baker's yeast), this protein is Large ribosomal subunit protein uL3.